The chain runs to 232 residues: Large ribosomal subunit protein uL1 (232 aa).

Belongs to the universal ribosomal protein uL1 family. As to quaternary structure, part of the 50S ribosomal subunit.

Its function is as follows. Binds directly to 23S rRNA. The L1 stalk is quite mobile in the ribosome, and is involved in E site tRNA release. Protein L1 is also a translational repressor protein, it controls the translation of the L11 operon by binding to its mRNA. The chain is Large ribosomal subunit protein uL1 from Paraburkholderia xenovorans (strain LB400).